The chain runs to 901 residues: HTH-type transcriptional regulator MalT (901 aa).

39–46 (SPAGYGKT) is a binding site for ATP. In terms of domain architecture, HTH luxR-type spans 829 to 894 (ELIRTSPLTQ…DAVQHAQQLL (66 aa)). Residues 853-872 (NEQIAGELDVAATTIKTHIR) constitute a DNA-binding region (H-T-H motif).

This sequence belongs to the MalT family. Monomer in solution. Oligomerizes to an active state in the presence of the positive effectors ATP and maltotriose.

Activated by ATP and maltotriose, which are both required for DNA binding. Its function is as follows. Positively regulates the transcription of the maltose regulon whose gene products are responsible for uptake and catabolism of malto-oligosaccharides. Specifically binds to the promoter region of its target genes, recognizing a short DNA motif called the MalT box. The polypeptide is HTH-type transcriptional regulator MalT (Klebsiella pneumoniae subsp. pneumoniae (strain ATCC 700721 / MGH 78578)).